Consider the following 628-residue polypeptide: Pinene synthase, chloroplastic (628 aa).

Residues 1–36 (MALVSTAPLASKSCLHKSLISSTHELKALSRTIPAL) constitute a chloroplast transit peptide. Mg(2+)-binding residues include aspartate 379, aspartate 383, and aspartate 531. The DDXXD motif signature appears at 379–383 (DDMYD).

It belongs to the terpene synthase family. Tpsd subfamily. Mg(2+) is required as a cofactor. It depends on Mn(2+) as a cofactor. K(+) serves as cofactor.

The protein resides in the plastid. It localises to the chloroplast. It catalyses the reaction (2E)-geranyl diphosphate = (1S,5S)-alpha-pinene + diphosphate. The catalysed reaction is (2E)-geranyl diphosphate = (1S,5S)-beta-pinene + diphosphate. It participates in terpene metabolism; oleoresin biosynthesis. In terms of biological role, involved in defensive oleoresin formation in conifers in response to insect attack or other injury. Involved in monoterpene (C10) olefins biosynthesis. A mixture of alpha- and beta-pinene is produced by this enzyme. The protein is Pinene synthase, chloroplastic (ag3) of Abies grandis (Grand fir).